Here is a 229-residue protein sequence, read N- to C-terminus: UPF0228 protein MA_3119 (229 aa).

A compositionally biased stretch (low complexity) spans 35–66 (STPVNTSTPVNTSTPVNTSTPVNTSTPVSTST). The segment at 35–67 (STPVNTSTPVNTSTPVNTSTPVNTSTPVSTSTI) is disordered.

Belongs to the UPF0228 family.

The polypeptide is UPF0228 protein MA_3119 (Methanosarcina acetivorans (strain ATCC 35395 / DSM 2834 / JCM 12185 / C2A)).